A 366-amino-acid chain; its full sequence is Nucleoporin SEH1 (366 aa).

WD repeat units follow at residues 18–57 (AHRD…NWRR), 63–104 (CHGG…TEKD), 111–152 (QWIR…RIYE), 161–209 (RWNL…VIYE), 226–267 (DMPC…TAIL), and 290–329 (GDQR…QWVK).

Belongs to the WD repeat SEC13 family. Component of the nuclear pore complex (NPC). Probably part of the GATOR complex.

The protein localises to the nucleus. The protein resides in the nuclear pore complex. It localises to the lysosome membrane. Its function is as follows. Probable component of the nuclear pore complex (NPC) which is involved in the trafficking of macromolecules between the cytoplasm and nucleus. Functionally, as a component of the GATOR complex may function in the amino acid-sensing branch of the TORC1 signaling pathway. The chain is Nucleoporin SEH1 from Caenorhabditis briggsae.